Here is a 524-residue protein sequence, read N- to C-terminus: Metalloendopeptidase OMA1, mitochondrial (524 aa).

The transit peptide at 1 to 13 (MSFICGLQSAARN) directs the protein to the mitochondrion. Positions 14-143 (HVFFRFNSLS…RNFHTSPRFQ (130 aa)) are excised as a propeptide. The Mitochondrial matrix portion of the chain corresponds to 144-195 (AAPVPLLLMILKPVQKLFAIIVGRGIRKWWQALPPNKKEVVKENIRKNKWKL). Residues 148 to 167 (PLLLMILKPVQKLFAIIVGR) are cardiolipin-binding. The tract at residues 165–195 (VGRGIRKWWQALPPNKKEVVKENIRKNKWKL) is stress-sensor region. A helical membrane pass occupies residues 196–216 (FLGLSSFGLLFVVFYFTHLEV). Zn(2+) is bound at residue histidine 327. The active site involves glutamate 328. The Zn(2+) site is built by histidine 331 and glutamate 392. The cysteines at positions 407 and 465 are disulfide-linked.

This sequence belongs to the peptidase M48 family. In terms of assembly, homooligomer. The cofactor is Zn(2+). May form a redox-dependent disulfide bond. Exists in a semi-oxidized state and is activated by prolonged hypoxia. Post-translationally, autocatalytically cleaved in response to mitochondrial depolarization both at the N-terminus and C-terminus to generate the short active form (S-OMA1). Autocatalytic processing at the C-terminus takes place at residues 447-456. The S-OMA1 form is unstable. OMA1 pre-processing by AFG3L2 may participate in maturation before OMA1 autocatalytic cleavage. Degraded by YMEL1 in response to membrane depolarization. Protein turnover is regulated by prohibitin (PHB and PHB2), which promotes degradation of OMA1 in a cardiolipin-binding manner. Widely expressed, with strong expression in the heart, skeletal muscle, kidney and liver.

Its subcellular location is the mitochondrion inner membrane. Protease activity is activated upon autocatalytic cleavage in response to mitochondrial depolarization. Metalloprotease that is part of the quality control system in the inner membrane of mitochondria. Activated in response to various mitochondrial stress, leading to the proteolytic cleavage of target proteins, such as OPA1, UQCC3 and DELE1. Involved in the fusion of the mitochondrial inner membranes by mediating cleavage of OPA1 at S1 position, generating the soluble OPA1 (S-OPA1), which cooperates with the membrane form (L-OPA1) to coordinate the fusion of mitochondrial inner membranes. Following stress conditions that induce loss of mitochondrial membrane potential, mediates cleavage of OPA1, leading to excess production of soluble OPA1 (S-OPA1) and negative regulation of mitochondrial fusion. Involved in mitochondrial safeguard in response to transient mitochondrial membrane depolarization (flickering) by catalyzing cleavage of OPA1, leading to excess production of S-OPA1, preventing mitochondrial hyperfusion. Also acts as a regulator of apoptosis: upon BAK and BAX aggregation, mediates cleavage of OPA1, leading to the remodeling of mitochondrial cristae and allowing the release of cytochrome c from mitochondrial cristae. In depolarized mitochondria, may also act as a backup protease for PINK1 by mediating PINK1 cleavage and promoting its subsequent degradation by the proteasome. May also cleave UQCC3 in response to mitochondrial depolarization. Also acts as an activator of the integrated stress response (ISR): in response to mitochondrial stress, mediates cleavage of DELE1 to generate the processed form of DELE1 (S-DELE1), which translocates to the cytosol and activates EIF2AK1/HRI to trigger the ISR. Its role in mitochondrial quality control is essential for regulating lipid metabolism as well as to maintain body temperature and energy expenditure under cold-stress conditions. Binds cardiolipin, possibly regulating its protein turnover. Required for the stability of the respiratory supercomplexes. In Homo sapiens (Human), this protein is Metalloendopeptidase OMA1, mitochondrial.